A 299-amino-acid chain; its full sequence is Bifunctional protein FolD (299 aa).

NADP(+) is bound by residues 168–170 (GRS), Ser193, and Ile234.

It belongs to the tetrahydrofolate dehydrogenase/cyclohydrolase family. In terms of assembly, homodimer.

It catalyses the reaction (6R)-5,10-methylene-5,6,7,8-tetrahydrofolate + NADP(+) = (6R)-5,10-methenyltetrahydrofolate + NADPH. It carries out the reaction (6R)-5,10-methenyltetrahydrofolate + H2O = (6R)-10-formyltetrahydrofolate + H(+). The protein operates within one-carbon metabolism; tetrahydrofolate interconversion. Catalyzes the oxidation of 5,10-methylenetetrahydrofolate to 5,10-methenyltetrahydrofolate and then the hydrolysis of 5,10-methenyltetrahydrofolate to 10-formyltetrahydrofolate. The chain is Bifunctional protein FolD from Rhizobium johnstonii (strain DSM 114642 / LMG 32736 / 3841) (Rhizobium leguminosarum bv. viciae).